Here is a 181-residue protein sequence, read N- to C-terminus: Small ribosomal subunit protein uS4 (181 aa).

The S4 RNA-binding domain maps to 104–172 (RRLQTIVYKK…SRPPVMSQQE (69 aa)).

This sequence belongs to the universal ribosomal protein uS4 family. Part of the 30S ribosomal subunit. Contacts protein S5. The interaction surface between S4 and S5 is involved in control of translational fidelity.

Its function is as follows. One of the primary rRNA binding proteins, it binds directly to 16S rRNA where it nucleates assembly of the body of the 30S subunit. In terms of biological role, with S5 and S12 plays an important role in translational accuracy. This Saccharolobus solfataricus (strain ATCC 35092 / DSM 1617 / JCM 11322 / P2) (Sulfolobus solfataricus) protein is Small ribosomal subunit protein uS4.